The primary structure comprises 360 residues: MKTWVIKIGTSILRGTEETSTEEVIENLSRSFTSFLSKGNKLILVTSGAVGLGCQKLNIKTRPNDLSTLQATAAVGQVNLMSLYDKVFNKLGLNIAQILITKADFNSRESFNNASKTLKRLIDLNVIPIVNENDTVANEELKYGDNDTLSALVALAINANKLILLTDIENLYSKDPRNNKDAQPIKEVHNSELKEIKDKNIQNSNNEWGTGGISTKLISAEIATKGGVEVQLVDGTNKKNLIEIFNDNKIGTLFYPVEKPIGNKKSWLSHAIQTVGKITLDDGASFAIKKKGASLLAVGVKNVEGNFTINQAVKIVNTNDKEVAKGLVSISSDKLRSILNNKENNNSSIIVVHRDVLALS.

K7 serves as a coordination point for ATP. S47, D134, and N146 together coordinate substrate. Residues 166 to 167 (TD) and 210 to 216 (TGGISTK) each bind ATP. Residues 275-356 (VGKITLDDGA…SSIIVVHRDV (82 aa)) form the PUA domain.

It belongs to the glutamate 5-kinase family.

The protein localises to the cytoplasm. It catalyses the reaction L-glutamate + ATP = L-glutamyl 5-phosphate + ADP. It functions in the pathway amino-acid biosynthesis; L-proline biosynthesis; L-glutamate 5-semialdehyde from L-glutamate: step 1/2. Functionally, catalyzes the transfer of a phosphate group to glutamate to form L-glutamate 5-phosphate. In Prochlorococcus marinus (strain MIT 9301), this protein is Glutamate 5-kinase.